The chain runs to 301 residues: Lufaxin (301 aa).

A signal peptide spans 1–23 (MNSINFLSIVGLISFGFIVAVKC). 4 disulfide bridges follow: cysteine 52-cysteine 60, cysteine 78-cysteine 137, cysteine 102-cysteine 112, and cysteine 258-cysteine 265. N-linked (GlcNAc...) asparagine glycosylation is present at asparagine 262.

In terms of assembly, interacts with factor Xa. Associates with complement proconvertase C3b-B complex. In terms of tissue distribution, expressed in salivary glands.

Its subcellular location is the secreted. In terms of biological role, sand fly salivary protein with antithrombotic, and anti-complement (alternative pathway) activities. Is a slow, tight, non-competitive, and reversible inhibitor of factor Xa (FXa, F10). Is specific for FXa (Kd=3.86 nM) and does not interact with non-activated FX, or all other enzymes tested. In addition, it blocks prothrombinase and increases both prothrombin time and activated partial thromboplastin time. It also prevents protease-activated receptor 2 (F2RL1, PAR2) activation by FXa. In vivo, it abrogates edema formation triggered by injection of FXa in the paw of mice. Moreover, it prevents FeCl(3)-induced carotid artery thrombus formation and prolongs activated partial thromboplastin time ex vivo, implying that it works as an anticoagulant in vivo. It also inhibits the early steps of the alternative pathway of complement by direct binding to the proconvertase C3b-B complex, by inhibiting activation of factor B and consequently the formation of the C3 convertase. The sequence is that of Lufaxin from Lutzomyia longipalpis (Sand fly).